The sequence spans 76 residues: Protein UvsW.1 (76 aa).

Probably interacts with UvsW.

Its function is as follows. Inhibits the single-stranded annealing activity of UvsW, has no effect on UvsW helicase activity. The polypeptide is Protein UvsW.1 (Escherichia coli (Bacteriophage T4)).